The sequence spans 899 residues: Toll-like receptor 4 (899 aa).

The signal sequence occupies residues 1–46 (MCPLQIHVLHLIQGNQKNRKGKYVNMTRQLWYILPLLFLLCHCVTS). N-linked (GlcNAc...) asparagine glycosylation is found at asparagine 25, asparagine 75, asparagine 83, and asparagine 93. Residues 47–702 (ERRCYFSKIS…LERNCRSYTA (656 aa)) lie on the Extracellular side of the membrane. LRR repeat units follow at residues 83 to 103 (NESV…PDLP), 104 to 126 (RSLL…AFAR), 128 to 150 (QNLT…LTAG), 155 to 179 (LTRL…VLSD), 181 to 202 (VSLN…MRKI), 203 to 229 (HALK…YFQN), and 230 to 253 (VHGI…TFSY). Residues asparagine 129, asparagine 137, asparagine 146, and asparagine 168 are each glycosylated (N-linked (GlcNAc...) asparagine). Asparagine 237, asparagine 256, asparagine 275, and asparagine 313 each carry an N-linked (GlcNAc...) asparagine glycan. 4 LRR repeats span residues 257–282 (LTHL…DLKN), 313–336 (NTSL…VLMY), 338–360 (PKTL…ALET), and 363–386 (LVNL…IFSN). N-linked (GlcNAc...) asparagine glycans are attached at residues asparagine 388, asparagine 432, and asparagine 463. 7 LRR repeats span residues 468-493 (HYPL…VFYD), 501-524 (LEGL…FFDY), 526-549 (TGLK…EKGE), 554-577 (LLKL…ILRN), 579-601 (ISLE…LKHI), 602-624 (KGLR…VMRE), and 631-654 (SSNL…HFLR). Asparagine 516 is a glycosylation site (N-linked (GlcNAc...) asparagine). N-linked (GlcNAc...) asparagine glycosylation is found at asparagine 633, asparagine 637, and asparagine 668. Residues 703–723 (VIVLFSCVFVILLTVIVCGVV) traverse the membrane as a helical segment. The Cytoplasmic portion of the chain corresponds to 724-899 (YRYRWKLRYL…WRKLRDPISM (176 aa)). The 142-residue stretch at 756–897 (YEFDAFISYA…IFWRKLRDPI (142 aa)) folds into the TIR domain.

This sequence belongs to the Toll-like receptor family. Expressed in all tissues tested. The highest expression is in the hepatopancreas, with moderate expression in the gills, and low expression in the gonads, adductor muscle, hemocytes, and mantle.

The protein localises to the cell membrane. May be involved in the innate immune response. This chain is Toll-like receptor 4, found in Pinctada imbricata (Atlantic pearl-oyster).